The following is a 544-amino-acid chain: Matrilin-1 (544 aa).

The first 26 residues, 1 to 26 (MRALSGPRLMLCGLLLLLFQAPCALG), serve as a signal peptide directing secretion. Residues 42–217 (DLVFVVDSSR…SVIEKLSKKF (176 aa)) enclose the VWFA 1 domain. A glycan (N-linked (GlcNAc...) asparagine) is linked at asparagine 77. The EGF-like domain maps to 224 to 264 (VSDLCATGDHDCEQVCVSSPGSYTCACREGFTLNSDGKTCN). 3 disulfide bridges follow: cysteine 228–cysteine 239, cysteine 235–cysteine 248, and cysteine 250–cysteine 263. Residues 276–448 (DLVFLIDGSK…KTINQIGKKL (173 aa)) enclose the VWFA 2 domain. Residue asparagine 345 is glycosylated (N-linked (GlcNAc...) asparagine).

As to quaternary structure, homotrimer. Part of a complex composed of MATN1 (via VWFA1 domain), type 2 collagens and type 6 collagens. Forms a complex (via covalent bonds) with ACAN; the interaction increases in abundance with increasing age of the organism via an increase in occupancy of MATN1 binding sites. Interacts with COMP. In terms of processing, N-glycosylated; reduces binding affinity for type 2 collagens. In terms of tissue distribution, expressed in trachea from fetus into adulthood (at protein level).

Its subcellular location is the secreted. It localises to the extracellular space. The protein resides in the extracellular matrix. Functionally, a major component of the extracellular matrix of non-articular cartilage. Binds to type 2 collagens and forms long concatenated protein networks as part of the extracellular matrix. Required for the network-like organization and bundling of collagen fibrils surrounding chondrocytes in the zones of maturation and hypertrophy. Required for mechanotransduction and adaption to mechanical loading in cartilage chondrocytes, resulting in an increase in expression of the extracellular matrix components ACAN and COL2A1. Acts as a moderator of angiogenesis in response to injury. This is Matrilin-1 from Bos taurus (Bovine).